Here is a 398-residue protein sequence, read N- to C-terminus: 8-amino-7-oxononanoate synthase (398 aa).

R26 serves as a coordination point for substrate. 113-114 (GF) provides a ligand contact to pyridoxal 5'-phosphate. H138 provides a ligand contact to substrate. S181, H209, and T238 together coordinate pyridoxal 5'-phosphate. K241 is modified (N6-(pyridoxal phosphate)lysine). Residue T355 coordinates substrate.

The protein belongs to the class-II pyridoxal-phosphate-dependent aminotransferase family. BioF subfamily. As to quaternary structure, homodimer. Pyridoxal 5'-phosphate serves as cofactor.

It carries out the reaction 6-carboxyhexanoyl-[ACP] + L-alanine + H(+) = (8S)-8-amino-7-oxononanoate + holo-[ACP] + CO2. It functions in the pathway cofactor biosynthesis; biotin biosynthesis. Functionally, catalyzes the decarboxylative condensation of pimeloyl-[acyl-carrier protein] and L-alanine to produce 8-amino-7-oxononanoate (AON), [acyl-carrier protein], and carbon dioxide. The sequence is that of 8-amino-7-oxononanoate synthase from Aeromonas hydrophila subsp. hydrophila (strain ATCC 7966 / DSM 30187 / BCRC 13018 / CCUG 14551 / JCM 1027 / KCTC 2358 / NCIMB 9240 / NCTC 8049).